The chain runs to 66 residues: U-scoloptoxin(24)-Er2a (66 aa).

The N-terminal stretch at 1–23 is a signal peptide; that stretch reads MVKPLHCLIGIVLFLAVLNAGNG. The segment at 43–66 is disordered; that stretch reads SLFHGNQRKKRSEEKRFSDMEQTK. Over residues 53 to 66 the composition is skewed to basic and acidic residues; that stretch reads RSEEKRFSDMEQTK.

Belongs to the scoloptoxin-24 family. In terms of tissue distribution, expressed by the venom gland.

It localises to the secreted. The sequence is that of U-scoloptoxin(24)-Er2a from Ethmostigmus rubripes (Giant centipede).